The sequence spans 1469 residues: ABC transporter G family member 36 (1469 aa).

Met1 carries the post-translational modification N-acetylmethionine. Phosphoserine occurs at positions 37, 38, and 40. The residue at position 43 (Thr43) is a Phosphothreonine. Ser45 carries the post-translational modification Phosphoserine. The ABC transporter 1 domain occupies 171-444 (LGMIGIQFAK…FESFGFKCPE (274 aa)). Residue 204-211 (GPPSSGKT) coordinates ATP. Residues 522–735 (ELLKSCWDKE…AFNGLVVNEM (214 aa)) form the ABC transmembrane type-2 1 domain. Helical transmembrane passes span 540 to 560 (FFYV…STLF), 575 to 595 (LYIG…FAEM), 621 to 641 (LPTF…WMVV), 659 to 679 (FLLV…IASV), 685 to 705 (IANT…GFLL), 713 to 733 (WWGW…LVVN), and 772 to 792 (ISVG…TLAL). The interval 806 to 852 (PEEENEDADQGKDPMRRSLSTADGNRRGEVAMGRMSRDSAAEASGGA) is disordered. Ser825, Ser841, and Ser844 each carry phosphoserine. Over residues 829–845 (GNRRGEVAMGRMSRDSA) the composition is skewed to basic and acidic residues. The ABC transporter 2 domain maps to 867-1119 (MSFDDVKYFV…KVVEYFESFP (253 aa)). 912-919 (GVSGAGKT) provides a ligand contact to ATP. An ABC transmembrane type-2 2 domain is found at 1192-1406 (GQFKSCLWKQ…TVYGLIVSQY (215 aa)). The next 7 helical transmembrane spans lie at 1216–1236 (FIFT…IGGN), 1239–1259 (NAGD…FVGI), 1299–1319 (LPYV…MVGF), 1326–1346 (FFWF…YGMM), 1356–1376 (VASI…GFFI), 1384–1404 (WWIW…LIVS), and 1441–1461 (PVAA…AFCI).

It belongs to the ABC transporter superfamily. ABCG family. PDR (TC 3.A.1.205) subfamily. As to quaternary structure, interacts, in a Ca(2+)-dependent manner, with calmodulins CaM3, CaM7 and several CaM-like proteins (CML8, CML9, CML12/CAL4, CML37 and CML38), as well as with calcium regulated proteins CBL4/SOS3 and KIC. Phosphorylated upon perception of pathogen-associated molecular patterns (PAMPs); phosphorylations at Ser-40 and Ser-45, which likely regulate transport activity, are required for plant defense against pathogens (e.g. Blumeria graminis), but dispensable for recruitment to the host-pathogen interface and penetration sites. Phosphorylation at Ser-841 seems to be required for protein stability. As to expression, ubiquitous (at protein level). Higher levels in root hairs, stomata, epidermal cells, and hydathodes. Concentrated at the infection site of infected plants, including papillae and haustoria. Accumulates at the periphery of lateral root cap and root epidermal cells, especially in the outer lateral membrane domain facing the environment.

It is found in the cell membrane. The protein resides in the golgi apparatus. It localises to the trans-Golgi network membrane. Its subcellular location is the endoplasmic reticulum membrane. Its function is as follows. Together with ABCG37, regulates auxin homeostasis and responses by playing a dual role in coumarin (e.g. esculin) and in the auxin precursor indole 3-butyric acid (IBA) efflux transport, thus influencing cotyledons, roots and root hairs development. Mediates the transport (export into the apoplast) of distinct indole-type metabolites in distinct biological processes; a precursor of 4-O-beta-D-glucosyl-indol-3-yl formamide (4OGlcI3F), a pathogen-inducible tryptophan-derived compound (e.g. upon Blumeria graminis conidiospore inoculation), being a probable substrate in extracellular pathogen defense. Involved in the cellular detoxification of xenobiotics by promoting the excretion of some auxinic herbicides including 4-(2,4-dichlorophenoxy)butyric acid (2,4-DB) and other members of the phenoxyalkanoic acid family but not 2,4-dichlorophenoxyacetic acid (2,4-D). Mediates thymidine exudation in the rhizosphere. May be a transporter of lignin precursors during tracheary element differentiation. Key factor that controls the extent of cell death in the defense response. Necessary for both callose deposition and glucosinolate activation in response to pathogens. As a central component of nonhost resistance (NHR), required for limiting invasion by nonadapted pathogens including powdery mildews (e.g. Blumeria graminis and Erysiphe pisi), root-penetrating pathogenic fungi (e.g. Fusarium oxysporum), Phakopsora pachyrhizi and Colletotrichum gloeosporioides (anthracnose fungi), probably by sensing Ca(2+) via interactions with calmodulins (e.g. CaM7). Confers resistance to cadmium (Cd) and lead (Pb), probably as an efflux pump of Cd2+ or Cd conjugates, and possibly, of chemicals that mediate pathogen resistance. Promotes resistance to abiotic stresses (e.g. drought and salt stress) and favors general growth by preventing sodium accumulation in plants. Required for microbe-associated molecular patterns (MAMPs)- and salicylic acid (SA)-dependent hypersensitive cell death (HR), involving indole glucosinolate breakdown products (e.g. indole-3-acetonitrile), probably in a PEN2 myrosinase-dependent metabolic pathway, triggered by the recognition of effectors from incompatible pathogens including oomycetes and bacteria (e.g. AvrRpm1 and AvrRps4) and benzothiadiazole- (BTH), and leading to an induced protection against pathogens (e.g. Pseudomonas syringae pv. tomato DC3000, Golovinomyces orontii and Hyaloperonospora arabidopsidis). This chain is ABC transporter G family member 36, found in Arabidopsis thaliana (Mouse-ear cress).